A 112-amino-acid chain; its full sequence is Ig kappa chain V-III region TEPC 124 (112 aa).

Positions 1–23 are framework-1; it reads DIVLTQSPASLAVSLGQRATISC. Residues C23 and C92 are joined by a disulfide bond. The segment at 24 to 38 is complementarity-determining-1; the sequence is RASZSVNWYGNSFMZ. Residues 39–53 are framework-2; the sequence is WYZZKPGZPPKLLIY. A complementarity-determining-2 region spans residues 54–60; that stretch reads RASNLZS. Positions 61–92 are framework-3; it reads GIPARFSGSGSRTBFTLTIBPVZABDVATYFC. The complementarity-determining-3 stretch occupies residues 93–101; it reads ZZSBZAPWT. The segment at 102-111 is framework-4; that stretch reads FGSGTKLEIK.

This is Ig kappa chain V-III region TEPC 124 from Mus musculus (Mouse).